We begin with the raw amino-acid sequence, 135 residues long: ATP synthase epsilon chain (135 aa).

It belongs to the ATPase epsilon chain family. As to quaternary structure, F-type ATPases have 2 components, CF(1) - the catalytic core - and CF(0) - the membrane proton channel. CF(1) has five subunits: alpha(3), beta(3), gamma(1), delta(1), epsilon(1). CF(0) has three main subunits: a, b and c.

Its subcellular location is the cell inner membrane. Its function is as follows. Produces ATP from ADP in the presence of a proton gradient across the membrane. The sequence is that of ATP synthase epsilon chain from Bradyrhizobium sp. (strain ORS 278).